A 782-amino-acid chain; its full sequence is Small RNA degrading nuclease 3 (782 aa).

The region spanning methionine 145–valine 296 is the Exonuclease domain. Residues alanine 331–glycine 410 enclose the RRM 1 domain. Residues proline 426–arginine 464 form a disordered region. Positions threonine 469–glycine 549 constitute an RRM 2 domain. Residues aspartate 563 to alanine 605 are disordered. A coiled-coil region spans residues glutamate 577–alanine 605. A compositionally biased stretch (basic and acidic residues) spans threonine 595–alanine 605. Positions threonine 608–glycine 688 constitute an RRM 3 domain. The stretch at alanine 709–lysine 779 forms a coiled coil.

The protein belongs to the REXO1/REXO3 family. In terms of assembly, associated with the Mediator complex.

The protein localises to the nucleus. Its function is as follows. 3'-5' exonuclease degrading single-stranded small RNAs. This is Small RNA degrading nuclease 3 (SDN3) from Arabidopsis thaliana (Mouse-ear cress).